We begin with the raw amino-acid sequence, 201 residues long: dTTP/UTP pyrophosphatase (201 aa).

Catalysis depends on aspartate 80, which acts as the Proton acceptor.

This sequence belongs to the Maf family. YhdE subfamily. The cofactor is a divalent metal cation.

The protein resides in the cytoplasm. It carries out the reaction dTTP + H2O = dTMP + diphosphate + H(+). The enzyme catalyses UTP + H2O = UMP + diphosphate + H(+). Nucleoside triphosphate pyrophosphatase that hydrolyzes dTTP and UTP. May have a dual role in cell division arrest and in preventing the incorporation of modified nucleotides into cellular nucleic acids. The chain is dTTP/UTP pyrophosphatase from Novosphingobium aromaticivorans (strain ATCC 700278 / DSM 12444 / CCUG 56034 / CIP 105152 / NBRC 16084 / F199).